The sequence spans 80 residues: Biotin synthase auxiliary protein (80 aa).

The protein belongs to the BsaP family. It depends on iron-sulfur cluster as a cofactor.

Functionally, required for the activity of the biotin synthase BioB. The polypeptide is Biotin synthase auxiliary protein (Mycobacterium leprae (strain TN)).